A 388-amino-acid polypeptide reads, in one-letter code: Nocturnin (388 aa).

Glutamate 152 is a Mg(2+) binding site. Residues glutamate 152, 176–178 (KPW), asparagine 220, 243–246 (HLKA), 281–283 (DFN), and histidine 371 each bind substrate.

This sequence belongs to the CCR4/nocturin family. Requires Mg(2+) as cofactor. As to expression, expressed only in the photoreceptors of the retina. Expression is controlled by the retinal circadian clock.

Its subcellular location is the cytoplasm. The protein localises to the nucleus. It localises to the perinuclear region. It is found in the mitochondrion. The catalysed reaction is NADP(+) + H2O = phosphate + NAD(+). It carries out the reaction NADPH + H2O = phosphate + NADH. Functionally, phosphatase which catalyzes the conversion of NADP(+) to NAD(+) and of NADPH to NADH. Shows a small preference for NADPH over NADP(+). Component of the circadian clock or downstream effector of clock function. Exhibits a high amplitude circadian rhythm with maximal levels in early evening. In constant darkness or constant light, the amplitude of the rhythm decreases. The sequence is that of Nocturnin from Xenopus laevis (African clawed frog).